The following is a 266-amino-acid chain: Putative carbamate hydrolase RutD (266 aa).

Residues 15–128 (AVLLSSGLGG…NAHSARCFDA (114 aa)) form the AB hydrolase-1 domain.

This sequence belongs to the AB hydrolase superfamily. Hydrolase RutD family.

The enzyme catalyses carbamate + 2 H(+) = NH4(+) + CO2. Involved in pyrimidine catabolism. May facilitate the hydrolysis of carbamate, a reaction that can also occur spontaneously. This is Putative carbamate hydrolase RutD from Variovorax paradoxus (strain S110).